The primary structure comprises 77 residues: U11-lycotoxin-Ls1a (77 aa).

The N-terminal stretch at 1 to 20 (MKLIILTGLVLFAIVSLIEA) is a signal peptide. A propeptide spanning residues 21–26 (EEESGR) is cleaved from the precursor.

Belongs to the neurotoxin 19 (CSTX) family. 10 (U11-Lctx) subfamily. Contains 4 disulfide bonds. Expressed by the venom gland.

The protein resides in the secreted. The polypeptide is U11-lycotoxin-Ls1a (Lycosa singoriensis (Wolf spider)).